Here is a 336-residue protein sequence, read N- to C-terminus: N-acetyl-gamma-glutamyl-phosphate reductase (336 aa).

C156 is an active-site residue.

Belongs to the NAGSA dehydrogenase family. Type 1 subfamily.

The protein localises to the cytoplasm. It carries out the reaction N-acetyl-L-glutamate 5-semialdehyde + phosphate + NADP(+) = N-acetyl-L-glutamyl 5-phosphate + NADPH + H(+). It functions in the pathway amino-acid biosynthesis; L-arginine biosynthesis; N(2)-acetyl-L-ornithine from L-glutamate: step 3/4. Functionally, catalyzes the NADPH-dependent reduction of N-acetyl-5-glutamyl phosphate to yield N-acetyl-L-glutamate 5-semialdehyde. This chain is N-acetyl-gamma-glutamyl-phosphate reductase, found in Moritella profunda.